A 384-amino-acid polypeptide reads, in one-letter code: Cobalt-precorrin-5B C(1)-methyltransferase (384 aa).

This sequence belongs to the CbiD family.

The catalysed reaction is Co-precorrin-5B + S-adenosyl-L-methionine = Co-precorrin-6A + S-adenosyl-L-homocysteine. It participates in cofactor biosynthesis; adenosylcobalamin biosynthesis; cob(II)yrinate a,c-diamide from sirohydrochlorin (anaerobic route): step 6/10. Its function is as follows. Catalyzes the methylation of C-1 in cobalt-precorrin-5B to form cobalt-precorrin-6A. The polypeptide is Cobalt-precorrin-5B C(1)-methyltransferase (Marinomonas sp. (strain MWYL1)).